The chain runs to 104 residues: ATP-dependent Clp protease adapter protein ClpS (104 aa).

This sequence belongs to the ClpS family. Binds to the N-terminal domain of the chaperone ClpA.

Its function is as follows. Involved in the modulation of the specificity of the ClpAP-mediated ATP-dependent protein degradation. The chain is ATP-dependent Clp protease adapter protein ClpS from Bordetella bronchiseptica (strain ATCC BAA-588 / NCTC 13252 / RB50) (Alcaligenes bronchisepticus).